The primary structure comprises 356 residues: Competence protein ComGA (356 aa).

Residue 144 to 151 (GPTGSGKT) participates in ATP binding.

It belongs to the GSP E family.

Its subcellular location is the cell membrane. Functionally, required for uptake of DNA by competent cells. This chain is Competence protein ComGA (comGA), found in Bacillus subtilis (strain 168).